Consider the following 258-residue polypeptide: MTSCAHPHCRSQRNMNTPQKSALVVSAHSADFVWRAGGAIALHAEQGYAMHVVCLSFGERGESAKLWRKGEMTEAKVKDARREEAMAAAEILGASVEFFDIGDYPMRADKDTLFRLADVYRRVQPEFVLSHSLKDPYNYDHPLAMHLAQEARIIAQAEGYKPGEKIVGAPPVYAFEPHQPEQCEWRPDTFLDITSVWDKKYAAIQCMAGQEHLWEYYTRVALQRGVQAKRNVGITSARNIVYAEGLQSVFPRVTENLA.

Zn(2+) is bound by residues His28, Asp31, and His141.

It belongs to the MshB deacetylase family. Zn(2+) serves as cofactor.

The catalysed reaction is 2-hydroxy-4-oxobutane-1,2,4-tricarboxylate = 4-carboxy-2-hydroxy-cis,cis-muconate + H2O. Functionally, catalyzes the conversion of oxalomesaconic acid enol (OMAenol) to 4-carboxy-4-hydroxy-2-oxoadipic acid (CHA). Mediates the third step of gallate degradation pathway. This chain is 4-oxalmesaconate hydratase (galB), found in Pseudomonas putida (strain ATCC 47054 / DSM 6125 / CFBP 8728 / NCIMB 11950 / KT2440).